We begin with the raw amino-acid sequence, 369 residues long: D-alanine--D-alanine ligase (369 aa).

The ATP-grasp domain maps to 152-359; the sequence is KKLFAAEGLP…YPSLLATMVE (208 aa). 180–235 serves as a coordination point for ATP; the sequence is RERLGLPVFVKPARGGSSIGVSRVSSWDELDAAVAAARDHDPKVIVEAAIAGRELE. The Mg(2+) site is built by Asp-314, Glu-326, and Asn-328.

The protein belongs to the D-alanine--D-alanine ligase family. The cofactor is Mg(2+). It depends on Mn(2+) as a cofactor.

It localises to the cytoplasm. The enzyme catalyses 2 D-alanine + ATP = D-alanyl-D-alanine + ADP + phosphate + H(+). Its pathway is cell wall biogenesis; peptidoglycan biosynthesis. In terms of biological role, cell wall formation. This chain is D-alanine--D-alanine ligase, found in Mycobacterium avium (strain 104).